The sequence spans 145 residues: Putative pre-16S rRNA nuclease (145 aa).

Belongs to the YqgF nuclease family.

The protein resides in the cytoplasm. In terms of biological role, could be a nuclease involved in processing of the 5'-end of pre-16S rRNA. This chain is Putative pre-16S rRNA nuclease, found in Limosilactobacillus fermentum (strain NBRC 3956 / LMG 18251) (Lactobacillus fermentum).